Consider the following 839-residue polypeptide: LPS-assembly protein LptD (839 aa).

Residues 1-21 form the signal peptide; the sequence is MAIGITACVLSLINYQGLAYS.

Belongs to the LptD family. In terms of assembly, component of the lipopolysaccharide transport and assembly complex. Interacts with LptE and LptA.

The protein localises to the cell outer membrane. Together with LptE, is involved in the assembly of lipopolysaccharide (LPS) at the surface of the outer membrane. This is LPS-assembly protein LptD from Legionella pneumophila (strain Paris).